Here is a 164-residue protein sequence, read N- to C-terminus: CASP-like protein 1C1 (164 aa).

The Cytoplasmic segment spans residues M1–R15. A helical transmembrane segment spans residues G16–H36. At E37 to K56 the chain is on the extracellular side. Residues A57–P77 form a helical membrane-spanning segment. The Cytoplasmic segment spans residues K78–R83. Residues L84–I104 form a helical membrane-spanning segment. Residues A105–R132 are Extracellular-facing. The helical transmembrane segment at V133 to I153 threads the bilayer. Residues S154–V164 lie on the Cytoplasmic side of the membrane.

The protein belongs to the Casparian strip membrane proteins (CASP) family. Homodimer and heterodimers.

The protein localises to the cell membrane. The chain is CASP-like protein 1C1 from Populus trichocarpa (Western balsam poplar).